A 436-amino-acid chain; its full sequence is Xylose isomerase (436 aa).

Mg(2+)-binding residues include D306 and D308.

The protein belongs to the xylose isomerase family. Homotetramer. The cofactor is Mg(2+).

It localises to the cytoplasm. It catalyses the reaction alpha-D-xylose = alpha-D-xylulofuranose. This chain is Xylose isomerase, found in Sinorhizobium fredii (strain NBRC 101917 / NGR234).